A 708-amino-acid chain; its full sequence is Ubiquitin thioesterase ZRANB1 (708 aa).

Residues Glu-3–Ser-33 form a RanBP2-type 1 zinc finger. Zn(2+) contacts are provided by Cys-10, Cys-13, Cys-24, and Cys-27. Residues Thr-38–Arg-73 are disordered. RanBP2-type zinc fingers lie at residues Asn-84 to Thr-113 and Arg-149 to Asn-178. 8 residues coordinate Zn(2+): Cys-90, Cys-93, Cys-104, Cys-107, Cys-155, Cys-158, Cys-169, and Cys-172. Positions Arg-200–Glu-225 are disordered. Residues Ser-206–Arg-215 are compositionally biased toward polar residues. 2 ANK repeats span residues Lys-260–Asp-290 and Tyr-313–Ala-340. Residues Pro-392–Glu-641 are TRAF-binding. Positions Leu-432 to Met-592 constitute an OTU domain. Cys-443 acts as the Nucleophile in catalysis. Catalysis depends on His-585, which acts as the Proton acceptor.

Belongs to the peptidase C64 family. In terms of assembly, interacts with TRAF6. Interacts with APC. In terms of tissue distribution, widely expressed.

It localises to the cytoplasm. It is found in the nucleus. It catalyses the reaction Thiol-dependent hydrolysis of ester, thioester, amide, peptide and isopeptide bonds formed by the C-terminal Gly of ubiquitin (a 76-residue protein attached to proteins as an intracellular targeting signal).. In terms of biological role, ubiquitin thioesterase, which specifically hydrolyzes 'Lys-29'-linked and 'Lys-33'-linked diubiquitin. Also cleaves 'Lys-63'-linked chains, but with 40-fold less efficiency compared to 'Lys-29'-linked ones. Positive regulator of the Wnt signaling pathway that deubiquitinates APC protein, a negative regulator of Wnt-mediated transcription. Acts as a regulator of autophagy by mediating deubiquitination of PIK3C3/VPS34, thereby promoting autophagosome maturation. Plays a role in the regulation of cell morphology and cytoskeletal organization. Required in the stress fiber dynamics and cell migration. In Homo sapiens (Human), this protein is Ubiquitin thioesterase ZRANB1.